Here is a 303-residue protein sequence, read N- to C-terminus: N-acetyl-D-glucosamine kinase (303 aa).

ATP contacts are provided by residues 4–11 (GFDMGGTK) and 133–140 (GVGGGLIV). Zn(2+) is bound by residues histidine 157, cysteine 177, cysteine 179, and cysteine 184.

This sequence belongs to the ROK (NagC/XylR) family. NagK subfamily.

It carries out the reaction N-acetyl-D-glucosamine + ATP = N-acetyl-D-glucosamine 6-phosphate + ADP + H(+). The protein operates within cell wall biogenesis; peptidoglycan recycling. Its function is as follows. Catalyzes the phosphorylation of N-acetyl-D-glucosamine (GlcNAc) derived from cell-wall degradation, yielding GlcNAc-6-P. This chain is N-acetyl-D-glucosamine kinase, found in Yersinia enterocolitica serotype O:8 / biotype 1B (strain NCTC 13174 / 8081).